Consider the following 256-residue polypeptide: Ribosomal RNA small subunit methyltransferase J (256 aa).

S-adenosyl-L-methionine-binding positions include 101–102 (RD), 117–118 (ER), 153–154 (SS), and Asp176.

This sequence belongs to the methyltransferase superfamily. RsmJ family.

The protein resides in the cytoplasm. It carries out the reaction guanosine(1516) in 16S rRNA + S-adenosyl-L-methionine = N(2)-methylguanosine(1516) in 16S rRNA + S-adenosyl-L-homocysteine + H(+). Its function is as follows. Specifically methylates the guanosine in position 1516 of 16S rRNA. The protein is Ribosomal RNA small subunit methyltransferase J of Photobacterium profundum (strain SS9).